Reading from the N-terminus, the 763-residue chain is MAP7 domain-containing protein 2 (763 aa).

Positions 1–11 are enriched in gly residues; it reads MERSGGNGAGA. Disordered regions lie at residues 1–72, 102–127, and 140–531; these read MERS…REKC, LEEQ…LREE, and ERTQ…KAMI. Residues 12–31 are compositionally biased toward low complexity; that stretch reads RAGAPSEGAAKGSSLLSAKS. Residues 53 to 72 show a composition bias toward basic and acidic residues; sequence LKSDERQRLAKERREEREKC. Polar residues-rich tracts occupy residues 184 to 212 and 241 to 251; these read PSDT…NLPK and LKSSYKSSPTR. Over residues 312-321 the composition is skewed to low complexity; it reads KRSSSPVKSK. Basic and acidic residues-rich tracts occupy residues 354–372, 381–420, and 437–531; these read ETLK…KEGA, PREE…EHSA, and LAEK…KAMI. Residues 434-575 are a coiled coil; it reads AKILAEKRRQ…QERLERKKRI (142 aa).

It belongs to the MAP7 family. In terms of assembly, interacts (via N-terminus) with microtubules; facilitates microtubule stabilization. Interacts with kinesin-1 family members, KIF5A, KIF5B and KIF5C. In terms of tissue distribution, detected only in the brain and testis (at the protein level).

The protein localises to the cytoplasm. The protein resides in the cytoskeleton. It localises to the microtubule organizing center. It is found in the centrosome. Its subcellular location is the cell projection. The protein localises to the axon. In terms of biological role, microtubule-stabilizing protein involved in the control of cell motility and neurite outgrowth. Acts as a critical cofactor for kinesin transport; in the proximal axon regulates kinesin-1 family members, KIF5A, KIF5B and KIF5C recruitment to microtubules and contributes to kinesin-1-mediated transport in the axons. This is MAP7 domain-containing protein 2 (Map7d2) from Rattus norvegicus (Rat).